We begin with the raw amino-acid sequence, 326 residues long: Tetraacyldisaccharide 4'-kinase (326 aa).

58-65 (SVGGNGKT) provides a ligand contact to ATP.

This sequence belongs to the LpxK family.

It catalyses the reaction a lipid A disaccharide + ATP = a lipid IVA + ADP + H(+). It participates in glycolipid biosynthesis; lipid IV(A) biosynthesis; lipid IV(A) from (3R)-3-hydroxytetradecanoyl-[acyl-carrier-protein] and UDP-N-acetyl-alpha-D-glucosamine: step 6/6. In terms of biological role, transfers the gamma-phosphate of ATP to the 4'-position of a tetraacyldisaccharide 1-phosphate intermediate (termed DS-1-P) to form tetraacyldisaccharide 1,4'-bis-phosphate (lipid IVA). This Pseudoalteromonas translucida (strain TAC 125) protein is Tetraacyldisaccharide 4'-kinase.